The primary structure comprises 314 residues: Hydroxyethylthiazole kinase (314 aa).

Residue methionine 70 participates in substrate binding. Residues arginine 145 and serine 217 each contribute to the ATP site. Glycine 244 lines the substrate pocket.

It belongs to the Thz kinase family. The cofactor is Mg(2+).

The catalysed reaction is 5-(2-hydroxyethyl)-4-methylthiazole + ATP = 4-methyl-5-(2-phosphooxyethyl)-thiazole + ADP + H(+). Its pathway is cofactor biosynthesis; thiamine diphosphate biosynthesis; 4-methyl-5-(2-phosphoethyl)-thiazole from 5-(2-hydroxyethyl)-4-methylthiazole: step 1/1. Its function is as follows. Catalyzes the phosphorylation of the hydroxyl group of 4-methyl-5-beta-hydroxyethylthiazole (THZ). This is Hydroxyethylthiazole kinase from Bifidobacterium longum (strain NCC 2705).